The sequence spans 129 residues: Large ribosomal subunit protein bL12 (129 aa).

The protein belongs to the bacterial ribosomal protein bL12 family. Homodimer. Part of the ribosomal stalk of the 50S ribosomal subunit. Forms a multimeric L10(L12)X complex, where L10 forms an elongated spine to which 2 to 4 L12 dimers bind in a sequential fashion. Binds GTP-bound translation factors.

Functionally, forms part of the ribosomal stalk which helps the ribosome interact with GTP-bound translation factors. Is thus essential for accurate translation. This Mycobacteroides abscessus (strain ATCC 19977 / DSM 44196 / CCUG 20993 / CIP 104536 / JCM 13569 / NCTC 13031 / TMC 1543 / L948) (Mycobacterium abscessus) protein is Large ribosomal subunit protein bL12.